Here is a 350-residue protein sequence, read N- to C-terminus: Phenylalanine--tRNA ligase alpha subunit (350 aa).

Mg(2+) is bound at residue Glu257.

It belongs to the class-II aminoacyl-tRNA synthetase family. Phe-tRNA synthetase alpha subunit type 1 subfamily. In terms of assembly, tetramer of two alpha and two beta subunits. The cofactor is Mg(2+).

Its subcellular location is the cytoplasm. The catalysed reaction is tRNA(Phe) + L-phenylalanine + ATP = L-phenylalanyl-tRNA(Phe) + AMP + diphosphate + H(+). This Listeria monocytogenes serovar 1/2a (strain ATCC BAA-679 / EGD-e) protein is Phenylalanine--tRNA ligase alpha subunit.